The primary structure comprises 122 residues: Large ribosomal subunit protein uL14 (122 aa).

The protein belongs to the universal ribosomal protein uL14 family. As to quaternary structure, part of the 50S ribosomal subunit. Forms a cluster with proteins L3 and L19. In the 70S ribosome, L14 and L19 interact and together make contacts with the 16S rRNA in bridges B5 and B8.

Its function is as follows. Binds to 23S rRNA. Forms part of two intersubunit bridges in the 70S ribosome. The sequence is that of Large ribosomal subunit protein uL14 from Chlorobium phaeobacteroides (strain BS1).